The primary structure comprises 149 residues: NPC intracellular cholesterol transporter 2 (149 aa).

The first 19 residues, 1–19 (MHFLAAAFLLLTLSASALA), serve as a signal peptide directing secretion. 3 cysteine pairs are disulfide-bonded: C27/C140, C42/C47, and C93/C99. N58 carries an N-linked (GlcNAc...) asparagine glycan. K116 carries the post-translational modification N6-acetyllysine.

Belongs to the NPC2 family. As to quaternary structure, interacts with NPC1 (via the second lumenal domain) in a cholestrol-dependent manner. Interacts with NUS1/NgBR, the interaction stabilizes NCP2 and regulates cholesterol trafficking. Interacts with DHDDS. Interacts with NEDD4L (via C2 domain). Interacts with NPC1L1. N-glycosylated. Found in the epididymal fluid as a 19 kDa glycoprotein that is processed during its passage through the epididymis into a 16 kDa protein. Found in the fluid from the distal caput to cauda epididymis, not detected in the rete testis and the proximal and middle caput epididymal fluids (at protein level).

It is found in the secreted. The protein localises to the endoplasmic reticulum. The protein resides in the lysosome. It catalyses the reaction cholesterol(in) = cholesterol(out). In terms of biological role, intracellular cholesterol transporter which acts in concert with NPC1 and plays an important role in the egress of cholesterol from the lysosomal compartment. Unesterified cholesterol that has been released from LDLs in the lumen of the late endosomes/lysosomes is transferred by NPC2 to the cholesterol-binding pocket in the N-terminal domain of NPC1. May bind and mobilize cholesterol that is associated with membranes. NPC2 binds cholesterol with a 1:1 stoichiometry. Can bind a variety of sterols, including lathosterol, desmosterol and the plant sterols stigmasterol and beta-sitosterol. The secreted form of NCP2 regulates biliary cholesterol secretion via stimulation of ABCG5/ABCG8-mediated cholesterol transport. The protein is NPC intracellular cholesterol transporter 2 of Sus scrofa (Pig).